Reading from the N-terminus, the 209-residue chain is Uracil phosphoribosyltransferase (209 aa).

5-phospho-alpha-D-ribose 1-diphosphate is bound by residues Arg-79, Arg-104, and 131-139 (DPMLATGAS). Residues Ile-194 and 199–201 (GDA) each bind uracil. Asp-200 lines the 5-phospho-alpha-D-ribose 1-diphosphate pocket.

The protein belongs to the UPRTase family. Mg(2+) is required as a cofactor.

It carries out the reaction UMP + diphosphate = 5-phospho-alpha-D-ribose 1-diphosphate + uracil. The protein operates within pyrimidine metabolism; UMP biosynthesis via salvage pathway; UMP from uracil: step 1/1. Allosterically activated by GTP. Functionally, catalyzes the conversion of uracil and 5-phospho-alpha-D-ribose 1-diphosphate (PRPP) to UMP and diphosphate. This chain is Uracil phosphoribosyltransferase, found in Staphylococcus aureus (strain JH1).